Here is a 338-residue protein sequence, read N- to C-terminus: MSITRRTTLSKYLIEQQRETHNLPADLRLLIEVVARACKAISYNVSKGALGDALGTAGSENVQGEVQKKLDILSNEILLDANEWGGNLAAMASEEMETFFPIPANYPRGEYLLVFDPLDGSSNIDVNVSIGTIFSVLRCPDGQQATEQSFLQPGTEQVAAGYAVYGPQTVFVLTTGNGVNCFTLDREVGSWVLTQSNLRIPEDTREYAINASNARHWYEPVKRYIDELNAGAEGPRGENFNMRWIASMVADVHRILNRGGIFMYPADKRTPDRPGKLRLMYEANPMSFIVEQAGGAATTGLKRILDVQPTGLHQRVPVILGSKNEVERVARYHEQAQS.

The Mg(2+) site is built by Glu94, Asp116, Leu118, and Asp119. Substrate is bound by residues 119–122 (DGSS), Asn210, and Lys276. Glu282 contacts Mg(2+).

This sequence belongs to the FBPase class 1 family. Homotetramer. Mg(2+) serves as cofactor.

The protein localises to the cytoplasm. The enzyme catalyses beta-D-fructose 1,6-bisphosphate + H2O = beta-D-fructose 6-phosphate + phosphate. The protein operates within carbohydrate biosynthesis; gluconeogenesis. The protein is Fructose-1,6-bisphosphatase class 1 of Burkholderia mallei (strain NCTC 10247).